The sequence spans 363 residues: 3-dehydroquinate synthase (363 aa).

NAD(+) contacts are provided by residues 134-135, K147, and K156; that span reads TT. Zn(2+) is bound by residues E189, H254, and H271.

Belongs to the sugar phosphate cyclases superfamily. Dehydroquinate synthase family. The cofactor is Co(2+). Requires Zn(2+) as cofactor. NAD(+) serves as cofactor.

The protein localises to the cytoplasm. It catalyses the reaction 7-phospho-2-dehydro-3-deoxy-D-arabino-heptonate = 3-dehydroquinate + phosphate. The protein operates within metabolic intermediate biosynthesis; chorismate biosynthesis; chorismate from D-erythrose 4-phosphate and phosphoenolpyruvate: step 2/7. Its function is as follows. Catalyzes the conversion of 3-deoxy-D-arabino-heptulosonate 7-phosphate (DAHP) to dehydroquinate (DHQ). This is 3-dehydroquinate synthase from Prochlorococcus marinus (strain AS9601).